We begin with the raw amino-acid sequence, 406 residues long: Solute carrier family 22 member 18 (406 aa).

Transmembrane regions (helical) follow at residues 8-28, 43-63, 85-105, 140-160, 168-188, 226-246, 258-278, 295-315, 316-336, and 374-394; these read GIIILTYVLAALELTCLFMQF, VSFGYLQTTFGVLQLLGGPVF, ALYLLLVASCSPALPGVFLLF, LGLCFGIGIIFGSLLGGTLNT, AILAFVVTLLGAVLSFTCVPA, FLVKVISGLPSGLFLVMFSII, AGYLMSFFGILQMMIQGLVIG, LVFAVVGLGMALMSSVLHFCF, LMPGLVFSLCTLNVVTDSMLT, and GVPIFGHVQLMVNLLVLLVLW.

This sequence belongs to the major facilitator (TC 2.A.1) superfamily. Organic cation transporter (TC 2.A.1.19) family. Interacts with RNF167. Expressed at high levels in fetal and adult kidney and liver, and extraembryonic membranes (yolk sac). Expressed at moderate levels in intestine, heart, lung and testis.

The protein localises to the apical cell membrane. Its function is as follows. May act as a transporter of organic cations based on a proton efflux antiport mechanism. May play a role in the transport of chloroquine and quinidine-related compounds in kidney. Plays a role in the regulation of lipid metabolism. This Mus musculus (Mouse) protein is Solute carrier family 22 member 18 (Slc67a1).